A 416-amino-acid polypeptide reads, in one-letter code: Adenylosuccinate synthetase (416 aa).

GTP is bound by residues 13–19 (GDEGKGK) and 41–43 (GHT). The active-site Proton acceptor is the aspartate 14. Mg(2+) contacts are provided by aspartate 14 and glycine 41. IMP-binding positions include 14 to 17 (DEGK), 39 to 42 (NAGH), threonine 126, arginine 140, glutamine 220, threonine 235, and arginine 299. The active-site Proton donor is the histidine 42. 295 to 301 (VSTGRKR) serves as a coordination point for substrate. GTP contacts are provided by residues arginine 301, 327 to 329 (KLD), and 405 to 407 (STS).

It belongs to the adenylosuccinate synthetase family. As to quaternary structure, homodimer. It depends on Mg(2+) as a cofactor.

The protein resides in the cytoplasm. It catalyses the reaction IMP + L-aspartate + GTP = N(6)-(1,2-dicarboxyethyl)-AMP + GDP + phosphate + 2 H(+). It functions in the pathway purine metabolism; AMP biosynthesis via de novo pathway; AMP from IMP: step 1/2. Its function is as follows. Plays an important role in the de novo pathway of purine nucleotide biosynthesis. Catalyzes the first committed step in the biosynthesis of AMP from IMP. The chain is Adenylosuccinate synthetase from Campylobacter jejuni subsp. jejuni serotype O:6 (strain 81116 / NCTC 11828).